Consider the following 310-residue polypeptide: Aspartate carbamoyltransferase catalytic subunit (310 aa).

Carbamoyl phosphate contacts are provided by Arg-60 and Thr-61. L-aspartate is bound at residue Lys-88. 3 residues coordinate carbamoyl phosphate: Arg-110, His-138, and Gln-141. L-aspartate-binding residues include Arg-171 and Arg-225. Carbamoyl phosphate-binding residues include Gly-266 and Pro-267.

This sequence belongs to the aspartate/ornithine carbamoyltransferase superfamily. ATCase family. Heterododecamer (2C3:3R2) of six catalytic PyrB chains organized as two trimers (C3), and six regulatory PyrI chains organized as three dimers (R2).

The catalysed reaction is carbamoyl phosphate + L-aspartate = N-carbamoyl-L-aspartate + phosphate + H(+). It participates in pyrimidine metabolism; UMP biosynthesis via de novo pathway; (S)-dihydroorotate from bicarbonate: step 2/3. Its function is as follows. Catalyzes the condensation of carbamoyl phosphate and aspartate to form carbamoyl aspartate and inorganic phosphate, the committed step in the de novo pyrimidine nucleotide biosynthesis pathway. This is Aspartate carbamoyltransferase catalytic subunit from Christiangramia forsetii (strain DSM 17595 / CGMCC 1.15422 / KT0803) (Gramella forsetii).